Here is a 465-residue protein sequence, read N- to C-terminus: Casein kinase 1-like protein 2 (465 aa).

The 269-residue stretch at Phe-9–Ile-277 folds into the Protein kinase domain. Residues Ile-15–Ile-23 and Lys-38 each bind ATP. Catalysis depends on Asp-128, which acts as the Proton acceptor. Disordered stretches follow at residues Ser-300–Arg-344 and Arg-396–Asn-428. Residues Ser-405–Asn-428 show a composition bias toward polar residues.

This sequence belongs to the protein kinase superfamily. CK1 Ser/Thr protein kinase family. Casein kinase I subfamily. As to quaternary structure, monomer. Post-translationally, autophosphorylated.

The protein resides in the cytoplasm. It localises to the nucleus. The enzyme catalyses L-seryl-[protein] + ATP = O-phospho-L-seryl-[protein] + ADP + H(+). It carries out the reaction L-threonyl-[protein] + ATP = O-phospho-L-threonyl-[protein] + ADP + H(+). In terms of biological role, casein kinases are operationally defined by their preferential utilization of acidic proteins such as caseins as substrates. It can phosphorylate a large number of proteins. This is Casein kinase 1-like protein 2 from Arabidopsis thaliana (Mouse-ear cress).